Here is a 569-residue protein sequence, read N- to C-terminus: Cationic amino acid transporter 9, chloroplastic (569 aa).

A chloroplast-targeting transit peptide spans 1-41; that stretch reads MGGHEGFSNQRLSSATWFSHFRASALRSKSLPPPSSQTAVR. Helical transmembrane passes span 53–73, 81–101, 113–135, 155–175, 181–201, 215–235, 250–270, 284–304, 333–353, 406–428, 444–464, 467–487, 502–522, and 528–548; these read GLFDLILLGVGASIGAGVFVV, AGPGVTISFLLAGASCVLNAL, VVGGAYMYSYSAFNEITAFLVFV, YAVALLELFPALKGSIPLWMG, LGGLLSLNILAPILLALLTLV, VMTATKVVIVLVVICAGAFEI, AVLTGATVVFFSYVGFDAVAN, IGIMGSLLVCISLYIGVCLVL, ILISIGAVAGLTTTLLVGLYV, HILSVGTLTGYSVVAACVVALRL, WQEGVICLVIIACSGFGAGVF, FSASVIFILLSVGVAVVASAV, FSCPGVPIVPSVCIFFNIFLF, and EAWIRFVVVSVLATAVYALYG.

It belongs to the amino acid-polyamine-organocation (APC) superfamily. Cationic amino acid transporter (CAT) (TC 2.A.3.3) family. Expressed in roots, stems, flowers, and leaves.

It is found in the plastid. It localises to the chloroplast membrane. In terms of biological role, permease involved in the transport of the cationic amino acids. This chain is Cationic amino acid transporter 9, chloroplastic (CAT9), found in Arabidopsis thaliana (Mouse-ear cress).